A 93-amino-acid chain; its full sequence is UPF0358 protein lwe1048 (93 aa).

This sequence belongs to the UPF0358 family.

The sequence is that of UPF0358 protein lwe1048 from Listeria welshimeri serovar 6b (strain ATCC 35897 / DSM 20650 / CCUG 15529 / CIP 8149 / NCTC 11857 / SLCC 5334 / V8).